The primary structure comprises 266 residues: Large ribosomal subunit protein eL8 (266 aa).

The span at 1 to 11 shows a compositional bias: basic residues; sequence MPKGKKAKGKK. Disordered stretches follow at residues 1–28 and 105–134; these read MPKG…KKVV and ETKQ…KRPP. Residues 116-130 are compositionally biased toward basic and acidic residues; it reads ARAEQKAAGKGDAPT.

The protein belongs to the eukaryotic ribosomal protein eL8 family. In terms of assembly, component of the large ribosomal subunit.

Its subcellular location is the cytoplasm. Functionally, component of the large ribosomal subunit. The ribosome is a large ribonucleoprotein complex responsible for the synthesis of proteins in the cell. In Takifugu rubripes (Japanese pufferfish), this protein is Large ribosomal subunit protein eL8 (rpl7a).